We begin with the raw amino-acid sequence, 207 residues long: BON1-associated protein 2 (207 aa).

Residues 1–112 (MSYSTFKRSL…GFAPQGHLNF (112 aa)) form the C2 domain.

In terms of assembly, interacts with BON1, BON2 and BON3. Expressed in roots, leaves, stems and flowers.

The protein resides in the membrane. Its function is as follows. Negative regulator of cell death and defense responses. Exhibits calcium-dependent phospholipid binding properties. In Arabidopsis thaliana (Mouse-ear cress), this protein is BON1-associated protein 2 (BAP2).